The sequence spans 173 residues: 2-C-methyl-D-erythritol 2,4-cyclodiphosphate synthase (173 aa).

A divalent metal cation contacts are provided by Asp17 and His19. 4-CDP-2-C-methyl-D-erythritol 2-phosphate-binding positions include 17-19 (DVH) and 49-50 (HS). His57 provides a ligand contact to a divalent metal cation. 4-CDP-2-C-methyl-D-erythritol 2-phosphate is bound by residues 76–80 (FPNTD), 147–150 (TTTE), and Arg157.

This sequence belongs to the IspF family. In terms of assembly, homotrimer. A divalent metal cation serves as cofactor.

It catalyses the reaction 4-CDP-2-C-methyl-D-erythritol 2-phosphate = 2-C-methyl-D-erythritol 2,4-cyclic diphosphate + CMP. It functions in the pathway isoprenoid biosynthesis; isopentenyl diphosphate biosynthesis via DXP pathway; isopentenyl diphosphate from 1-deoxy-D-xylulose 5-phosphate: step 4/6. Involved in the biosynthesis of isopentenyl diphosphate (IPP) and dimethylallyl diphosphate (DMAPP), two major building blocks of isoprenoid compounds. Catalyzes the conversion of 4-diphosphocytidyl-2-C-methyl-D-erythritol 2-phosphate (CDP-ME2P) to 2-C-methyl-D-erythritol 2,4-cyclodiphosphate (ME-CPP) with a corresponding release of cytidine 5-monophosphate (CMP). This Ehrlichia ruminantium (strain Gardel) protein is 2-C-methyl-D-erythritol 2,4-cyclodiphosphate synthase.